The following is a 741-amino-acid chain: NAD(P)H-quinone oxidoreductase subunit 5, chloroplastic (741 aa).

The next 16 helical transmembrane spans lie at 9–29 (WIIP…LLLF), 40–60 (WAFQ…NLSI), 89–109 (IDPL…LVLI), 125–145 (FAYM…SNLI), 147–167 (IYIF…FWFT), 185–205 (GDFG…SFEF), 219–239 (NEVN…GAIA), 258–278 (TPIS…FLVA), 283–303 (LFIV…ITVF), 327–347 (LGYM…FHLI), 354–374 (ALLF…VGYC), 396–416 (NSFL…CFWS), 425–445 (WLYS…TAFY), 549–569 (LFPI…GIHF), 605–625 (VFSV…YKPV), and 721–741 (YLFF…FVNL).

Belongs to the complex I subunit 5 family. As to quaternary structure, NDH is composed of at least 16 different subunits, 5 of which are encoded in the nucleus.

It localises to the plastid. The protein localises to the chloroplast thylakoid membrane. The enzyme catalyses a plastoquinone + NADH + (n+1) H(+)(in) = a plastoquinol + NAD(+) + n H(+)(out). It carries out the reaction a plastoquinone + NADPH + (n+1) H(+)(in) = a plastoquinol + NADP(+) + n H(+)(out). In terms of biological role, NDH shuttles electrons from NAD(P)H:plastoquinone, via FMN and iron-sulfur (Fe-S) centers, to quinones in the photosynthetic chain and possibly in a chloroplast respiratory chain. The immediate electron acceptor for the enzyme in this species is believed to be plastoquinone. Couples the redox reaction to proton translocation, and thus conserves the redox energy in a proton gradient. This chain is NAD(P)H-quinone oxidoreductase subunit 5, chloroplastic (ndhF), found in Pentatrichia integra (Rock-climbing daisy).